A 232-amino-acid chain; its full sequence is MHITKLVLIRHGESQWNKENRFTGWVDVDLSEKGRSEAQCAGRILKKNGFFFNYGYTSVLKRAIHTLWIILDQLDQAWLPIEKSWRLNERHYGALQGLNKDEAIKEYGYKTIQKWRRSFNVIPPNICGGNNQFIATNDNRYANISTDELPSSESLELTLKRVIPYWNQSIIPHIKKGQTIIIVAHGNSIRAIIKFLNHLNESEIFQINVPTGVPLIYEFDKKANTVQHYYLK.

Substrate contacts are provided by residues 10–17 (RHGESQWN), 23–24 (TG), R62, 89–92 (ERHY), K100, 116–117 (RR), and 186–187 (GN). H11 acts as the Tele-phosphohistidine intermediate in catalysis. E89 functions as the Proton donor/acceptor in the catalytic mechanism.

This sequence belongs to the phosphoglycerate mutase family. BPG-dependent PGAM subfamily. Homodimer.

The catalysed reaction is (2R)-2-phosphoglycerate = (2R)-3-phosphoglycerate. It functions in the pathway carbohydrate degradation; glycolysis; pyruvate from D-glyceraldehyde 3-phosphate: step 3/5. In terms of biological role, catalyzes the interconversion of 2-phosphoglycerate and 3-phosphoglycerate. The polypeptide is 2,3-bisphosphoglycerate-dependent phosphoglycerate mutase (Blochmanniella pennsylvanica (strain BPEN)).